We begin with the raw amino-acid sequence, 86 residues long: Putative defensin-like protein 234 (86 aa).

The first 26 residues, 1–26 (MRSATLLLVSCVLLSFILGNVKEVEA), serve as a signal peptide directing secretion. 4 disulfides stabilise this stretch: cysteine 34–cysteine 86, cysteine 44–cysteine 71, cysteine 52–cysteine 80, and cysteine 69–cysteine 82.

It belongs to the DEFL family.

It is found in the secreted. In Arabidopsis thaliana (Mouse-ear cress), this protein is Putative defensin-like protein 234 (SCRL14).